The chain runs to 505 residues: Glycerol kinase (505 aa).

An ADP-binding site is contributed by Thr-15. Residues Thr-15, Thr-16, and Ser-17 each contribute to the ATP site. Thr-15 provides a ligand contact to sn-glycerol 3-phosphate. Arg-19 provides a ligand contact to ADP. Residues Arg-85, Glu-86, Tyr-136, and Asp-249 each contribute to the sn-glycerol 3-phosphate site. Residues Arg-85, Glu-86, Tyr-136, Asp-249, and Gln-250 each coordinate glycerol. ADP contacts are provided by Thr-271 and Gly-314. The ATP site is built by Thr-271, Gly-314, Gln-318, and Gly-415. Residues Gly-415 and Asn-419 each contribute to the ADP site.

The protein belongs to the FGGY kinase family.

It carries out the reaction glycerol + ATP = sn-glycerol 3-phosphate + ADP + H(+). It functions in the pathway polyol metabolism; glycerol degradation via glycerol kinase pathway; sn-glycerol 3-phosphate from glycerol: step 1/1. Its activity is regulated as follows. Inhibited by fructose 1,6-bisphosphate (FBP). Its function is as follows. Key enzyme in the regulation of glycerol uptake and metabolism. Catalyzes the phosphorylation of glycerol to yield sn-glycerol 3-phosphate. The sequence is that of Glycerol kinase from Mycoplasma mycoides subsp. mycoides SC (strain CCUG 32753 / NCTC 10114 / PG1).